The primary structure comprises 155 residues: Small ribosomal subunit protein uS7 (155 aa).

Belongs to the universal ribosomal protein uS7 family. As to quaternary structure, part of the 30S ribosomal subunit. Contacts proteins S9 and S11.

One of the primary rRNA binding proteins, it binds directly to 16S rRNA where it nucleates assembly of the head domain of the 30S subunit. Is located at the subunit interface close to the decoding center, probably blocks exit of the E-site tRNA. This Chlorobium phaeovibrioides (strain DSM 265 / 1930) (Prosthecochloris vibrioformis (strain DSM 265)) protein is Small ribosomal subunit protein uS7.